Consider the following 707-residue polypeptide: DNA ligase (707 aa).

A disordered region spans residues 1 to 23 (MSSKATQDPEAVLAEQSDDATEA). NAD(+) contacts are provided by residues 53–57 (DAEFD), 103–104 (SL), and glutamate 133. Lysine 135 functions as the N6-AMP-lysine intermediate in the catalytic mechanism. NAD(+) contacts are provided by arginine 156, glutamate 196, lysine 315, and lysine 339. Zn(2+) is bound by residues cysteine 433, cysteine 436, cysteine 452, and cysteine 458. The 86-residue stretch at 622 to 707 (SIERTLDGLS…LENGPDTPDS (86 aa)) folds into the BRCT domain.

It belongs to the NAD-dependent DNA ligase family. LigA subfamily. Requires Mg(2+) as cofactor. The cofactor is Mn(2+).

It catalyses the reaction NAD(+) + (deoxyribonucleotide)n-3'-hydroxyl + 5'-phospho-(deoxyribonucleotide)m = (deoxyribonucleotide)n+m + AMP + beta-nicotinamide D-nucleotide.. DNA ligase that catalyzes the formation of phosphodiester linkages between 5'-phosphoryl and 3'-hydroxyl groups in double-stranded DNA using NAD as a coenzyme and as the energy source for the reaction. It is essential for DNA replication and repair of damaged DNA. In Mycolicibacterium vanbaalenii (strain DSM 7251 / JCM 13017 / BCRC 16820 / KCTC 9966 / NRRL B-24157 / PYR-1) (Mycobacterium vanbaalenii), this protein is DNA ligase.